Here is a 210-residue protein sequence, read N- to C-terminus: Small ribosomal subunit protein uS3 (210 aa).

Residues I17–K86 form the KH type-2 domain.

The protein belongs to the universal ribosomal protein uS3 family. Part of the 30S ribosomal subunit.

Functionally, binds the lower part of the 30S subunit head. This is Small ribosomal subunit protein uS3 from Pyrococcus abyssi (strain GE5 / Orsay).